A 143-amino-acid chain; its full sequence is Adrenodoxin, mitochondrial (143 aa).

A mitochondrion-targeting transit peptide spans 1–19 (CSAVAVRTLRPLSLSARAA). Residues 26-130 (ITVHFINRDG…NMTVRVPEAV (105 aa)) enclose the 2Fe-2S ferredoxin-type domain. Positions 65, 71, 74, and 111 each coordinate [2Fe-2S] cluster.

It belongs to the adrenodoxin/putidaredoxin family. [2Fe-2S] cluster is required as a cofactor.

Its subcellular location is the mitochondrion matrix. Essential for the synthesis of various steroid hormones. Participates in the reduction of mitochondrial cytochrome P450 for steroidogenesis. Transfers electrons from adrenodoxin reductase to CYP11A1, a cytochrome P450 that catalyzes cholesterol side-chain cleavage. Does not form a ternary complex with adrenodoxin reductase and CYP11A1 but shuttles between the two enzymes to transfer electrons. The chain is Adrenodoxin, mitochondrial (FDX1) from Gallus gallus (Chicken).